A 685-amino-acid polypeptide reads, in one-letter code: UvrABC system protein B (685 aa).

The Helicase ATP-binding domain occupies 30-188 (DGVLRGDRWQ…QELVSLHYIR (159 aa)). 43-50 (GVTGSGKT) contributes to the ATP binding site. The Beta-hairpin motif lies at 96-119 (YYDFYQPEAYLPALDKYIAKDLRI). The Helicase C-terminal domain maps to 435–597 (QIDDLLAEIR…ITPRSIRKSL (163 aa)). One can recognise a UVR domain in the interval 641-676 (YAMVAELRLEMNEAAIQMEYEKAAYLRDEIARLMHG).

It belongs to the UvrB family. Forms a heterotetramer with UvrA during the search for lesions. Interacts with UvrC in an incision complex.

The protein localises to the cytoplasm. Functionally, the UvrABC repair system catalyzes the recognition and processing of DNA lesions. A damage recognition complex composed of 2 UvrA and 2 UvrB subunits scans DNA for abnormalities. Upon binding of the UvrA(2)B(2) complex to a putative damaged site, the DNA wraps around one UvrB monomer. DNA wrap is dependent on ATP binding by UvrB and probably causes local melting of the DNA helix, facilitating insertion of UvrB beta-hairpin between the DNA strands. Then UvrB probes one DNA strand for the presence of a lesion. If a lesion is found the UvrA subunits dissociate and the UvrB-DNA preincision complex is formed. This complex is subsequently bound by UvrC and the second UvrB is released. If no lesion is found, the DNA wraps around the other UvrB subunit that will check the other stand for damage. The sequence is that of UvrABC system protein B from Chlorobium phaeobacteroides (strain DSM 266 / SMG 266 / 2430).